The primary structure comprises 224 residues: Urease accessory protein UreF (224 aa).

The protein belongs to the UreF family. UreD, UreF and UreG form a complex that acts as a GTP-hydrolysis-dependent molecular chaperone, activating the urease apoprotein by helping to assemble the nickel containing metallocenter of UreC. The UreE protein probably delivers the nickel.

Its subcellular location is the cytoplasm. Required for maturation of urease via the functional incorporation of the urease nickel metallocenter. In Ectopseudomonas mendocina (strain ymp) (Pseudomonas mendocina), this protein is Urease accessory protein UreF.